We begin with the raw amino-acid sequence, 216 residues long: Uracil-DNA glycosylase (216 aa).

Aspartate 59 (proton acceptor) is an active-site residue.

The protein belongs to the uracil-DNA glycosylase (UDG) superfamily. UNG family.

It is found in the cytoplasm. The enzyme catalyses Hydrolyzes single-stranded DNA or mismatched double-stranded DNA and polynucleotides, releasing free uracil.. In terms of biological role, excises uracil residues from the DNA which can arise as a result of misincorporation of dUMP residues by DNA polymerase or due to deamination of cytosine. This chain is Uracil-DNA glycosylase, found in Staphylococcus epidermidis (strain ATCC 12228 / FDA PCI 1200).